Consider the following 449-residue polypeptide: Guanine nucleotide-binding protein alpha-2 subunit (449 aa).

The tract at residues 1-91 (MGLCASSEKN…TATANTSGSQ (91 aa)) is disordered. Gly-2 carries the N-myristoyl glycine lipid modification. The S-palmitoyl cysteine moiety is linked to residue Cys-4. Composition is skewed to polar residues over residues 7 to 23 (SEKNGSTPDTQTASAGS) and 38 to 48 (QKTVRTVNTAN). Positions 49-59 (QQEKQQQRQQQ) are enriched in low complexity. The segment covering 72–91 (NGSINNAISPTATANTSGSQ) has biased composition (polar residues). The G-alpha domain occupies 122 to 448 (KELKVLLLGA…ENTLKDSGVL (327 aa)). Residues 125–138 (KVLLLGAGESGKST) are G1 motif. Residues Glu-133, Ser-134, Gly-135, Lys-136, Ser-137, Thr-138, Asp-245, Leu-270, Thr-276, Gly-299, Asn-365, Lys-366, Asp-368, and Ala-420 each coordinate GTP. A Mg(2+)-binding site is contributed by Ser-137. Positions 268-276 (DILRSRQMT) are G2 motif. Thr-276 lines the Mg(2+) pocket. The interval 292–301 (MHIYDVGGQR) is G3 motif. The tract at residues 361-368 (VLFLNKID) is G4 motif. Residues 418-423 (TQATDT) form a G5 motif region.

Belongs to the G-alpha family. G(q) subfamily. G proteins are composed of 3 units; alpha, beta and gamma. The alpha chain contains the guanine nucleotide binding site. GPA2 interacts with the kelch repeat beta-mimic proteins GPB1 and GPB2 and with the gamma subunit GPG1. Interacts with the G protein coupled receptor GPR1. Also interacts with regulators of G protein signaling (RGS) protein RGS2. It depends on Mg(2+) as a cofactor. Myristoylation at Gly-2 and palmitoylation at Cys-4 are required for membrane localization and function of the protein.

The protein localises to the cell membrane. Alternates between an inactive form bound to GDP and an active form bound to GTP. Activated by the G protein coupled receptor (GPCR) GPR1, which serves as a guanine nucleotide-exchange factor (GEF), and inactivated by RGS2, acting as a GTPase-activating protein (GAP) for GPA2. Alpha subunit of the heterotrimeric guanine nucleotide-binding protein (G protein) involved in glucose-induced cAMP signaling. Binds to its cognate transmembrane receptor GPR1, which senses extracellular carbon sources, and activates cAMP-PKA signaling and governs diploid pseudohyphal differentiation and haploid invasive growth. The G protein beta-mimic proteins GPB1 and GPB2 inhibit GPA2-GPR1 coupling, probably to reduce signaling in the absence of glucose. This Saccharomyces cerevisiae (strain ATCC 204508 / S288c) (Baker's yeast) protein is Guanine nucleotide-binding protein alpha-2 subunit (GPA2).